The chain runs to 339 residues: UDP-3-O-acylglucosamine N-acyltransferase (339 aa).

The Proton acceptor role is filled by His251.

It belongs to the transferase hexapeptide repeat family. LpxD subfamily. Homotrimer.

It catalyses the reaction a UDP-3-O-[(3R)-3-hydroxyacyl]-alpha-D-glucosamine + a (3R)-hydroxyacyl-[ACP] = a UDP-2-N,3-O-bis[(3R)-3-hydroxyacyl]-alpha-D-glucosamine + holo-[ACP] + H(+). It functions in the pathway bacterial outer membrane biogenesis; LPS lipid A biosynthesis. Functionally, catalyzes the N-acylation of UDP-3-O-acylglucosamine using 3-hydroxyacyl-ACP as the acyl donor. Is involved in the biosynthesis of lipid A, a phosphorylated glycolipid that anchors the lipopolysaccharide to the outer membrane of the cell. In Paramagnetospirillum magneticum (strain ATCC 700264 / AMB-1) (Magnetospirillum magneticum), this protein is UDP-3-O-acylglucosamine N-acyltransferase.